A 263-amino-acid polypeptide reads, in one-letter code: Neurovirulence factor ICP34.5 (263 aa).

Residues 1–14 are compositionally biased toward basic residues; it reads MARRRRHRGPRRPR. The tract at residues 1 to 16 is required for nucleolar localization; the sequence is MARRRRHRGPRRPRPP. Disordered stretches follow at residues 1-128 and 149-190; these read MARR…PFRL and RRAG…PATP. Residues 24–35 are compositionally biased toward polar residues; sequence TAQSQVTSTPNS. A compositionally biased stretch (pro residues) spans 45-58; the sequence is AAPPPPPASGPPPS. The segment covering 73 to 83 has biased composition (acidic residues); it reads ASDDDDDDDWP. Composition is skewed to pro residues over residues 84-93 and 119-128; these read DSPPPEPAPE and SHPPSRPFRL. Residues 128 to 137 carry the Nuclear export signal motif; it reads LPPRLALRLR. 10 consecutive repeat copies span residues 161 to 163, 164 to 166, 167 to 169, 170 to 172, 173 to 175, 176 to 178, 179 to 181, 182 to 184, 185 to 187, and 188 to 190. The segment at 161 to 190 is 10 X 3 AA tandem repeats of A-T-P; the sequence is ATPATPATPATPATPATPATPATPATPATP. The segment covering 164–190 has biased composition (low complexity); it reads ATPATPATPATPATPATPATPATPATP. The interaction with host PPP1CA stretch occupies residues 190–203; sequence PARVRFSPHVRVRH. Residues 205–263 are important for interferon resistance; that stretch reads VVWASAARLARRGSWARERADRARFRRRVAEAEAVIGPCLGPEARARALARGAGPANSV. Positions 215–233 match the Bipartite nuclear localization signal motif; sequence RRGSWARERADRARFRRRV. The interval 233–248 is interaction with host EIF2S1/EIF-2ALPHA; it reads VAEAEAVIGPCLGPEA.

This sequence belongs to the PPP1R15 family. In terms of assembly, interacts with host PPP1CA; this interaction to forms a high-molecular-weight complex that dephosphorylates EIF2S1/eIF-2alpha. Interacts with host EIF2S1/eIF-2alpha; this interaction is crucial for the specific dephosphorylation of EIF2S1/eIF-2alpha by PPP1CA. Binds to proliferating cell nuclear antigen (PCNA), which may release host cells from growth arrest and facilitate viral replication. Interacts (via N-terminus) with host C1QBP; this interaction allows C1QBP to be recruited to the inner nuclear membrane by ICP34.5. Interacts with host PRKCA. Interacts with protein UL31. Interacts with host STING/TMEM173; this interaction inhibits the intracellular DNA sensing pathway. Interacts with host BECN1; this interaction modulates host autophagy.

Its subcellular location is the host cytoplasm. It is found in the host nucleus. The protein resides in the host nucleolus. The protein localises to the virion. Functionally, inhibits the establishment of the immune response and of the integrated stress response (ISR) in the infected cell. Plays essential roles in viral nuclear egress to mediate capsid transit across the nuclear membrane. Facilitates nuclear egress cooperatively with host C1QBP and protein kinase C/PKC to induce lamin A/C phosphorylation and subsequent reorganization. In turn, lamina disassembles and nuclear egress occurs. Recruits the serine/threonine protein phosphatase PPP1CA/PP1-alpha to dephosphorylate the translation initiation factor EIF2S1/eIF-2alpha, thereby couteracting the host shutoff of protein synthesis involving double-stranded RNA-dependent protein kinase EIF2AK2/PKR. In turn, controls host IRF3 activation and subsequently inhibits host interferon response. Controls the DNA sensing pathway by interacting with and inhibiting host STING/TMEM173. Also down-modulates the host MHC class II proteins cell surface expression. Acts as a neurovirulence factor that has a profound effect on the growth of the virus in central nervous system tissue, by interacting with host BECN1 and thereby antagonizing the host autophagy response. The chain is Neurovirulence factor ICP34.5 (RL1) from Human herpesvirus 1 (strain F) (HHV-1).